The sequence spans 188 residues: Trafficking protein particle complex subunit 5 (188 aa).

Serine 10 carries the phosphoserine modification.

This sequence belongs to the TRAPP small subunits family. BET3 subfamily. As to quaternary structure, component of the multisubunit TRAPP (transport protein particle) complex, which includes at least TRAPPC2, TRAPPC2L, TRAPPC3, TRAPPC3L, TRAPPC4, TRAPPC5, TRAPPC8, TRAPPC9, TRAPPC10, TRAPPC11 and TRAPPC12.

The protein localises to the golgi apparatus. It is found in the cis-Golgi network. It localises to the endoplasmic reticulum. May play a role in vesicular transport from endoplasmic reticulum to Golgi. This Homo sapiens (Human) protein is Trafficking protein particle complex subunit 5 (TRAPPC5).